The chain runs to 271 residues: MALTKRIIPCIDVDLNEDGEAAVYTGVNFEDLEYTGDPVELAKKYNEAGADEFVFLDITASAEGRETMLDTVSAVADECFIPLTVGGGIRTRDDIKETLRAGADKVSINTGALQRPELIGEGAEAFGSQCIVISVDARRRFDEAGEHYVEVDGESCWFECTIKGGREGTGTDVVEWAGEAADRGAGELFVNSIDADGTKDGYDIPLTKAVCDNVPTPVIASSGCGSPEHMAEVFEDADADAALAASIFHFEEYSIEETKRSLDEQGIPVRL.

Catalysis depends on residues aspartate 12 and aspartate 136.

It belongs to the HisA/HisF family. Heterodimer of HisH and HisF.

The protein localises to the cytoplasm. The enzyme catalyses 5-[(5-phospho-1-deoxy-D-ribulos-1-ylimino)methylamino]-1-(5-phospho-beta-D-ribosyl)imidazole-4-carboxamide + L-glutamine = D-erythro-1-(imidazol-4-yl)glycerol 3-phosphate + 5-amino-1-(5-phospho-beta-D-ribosyl)imidazole-4-carboxamide + L-glutamate + H(+). It participates in amino-acid biosynthesis; L-histidine biosynthesis; L-histidine from 5-phospho-alpha-D-ribose 1-diphosphate: step 5/9. Functionally, IGPS catalyzes the conversion of PRFAR and glutamine to IGP, AICAR and glutamate. The HisF subunit catalyzes the cyclization activity that produces IGP and AICAR from PRFAR using the ammonia provided by the HisH subunit. This chain is Imidazole glycerol phosphate synthase subunit HisF, found in Natronomonas pharaonis (strain ATCC 35678 / DSM 2160 / CIP 103997 / JCM 8858 / NBRC 14720 / NCIMB 2260 / Gabara) (Halobacterium pharaonis).